Reading from the N-terminus, the 498-residue chain is MRTNPTTSDPAVSIREKNNLGRIAQIIGPVLDVAFPPGKMPNIYNALVVKGRDTLGQEINVTCEVQQLLGNNRVRAVAMSATEGLKRGMDVVDMGNPLSVPVGGATLGRIFNVLGEPVDNLGPVDTSTTSPIHKSAPAFIQLDTKLSIFETGIKVVDLLAPYRRGGKIGLFGGAGVGKTSLIMELINNIAKAHGGVSVFGGVGERTREGNDLYKEMKESGVINELNLAESKVALVYGQMNEPPGARMRVGLTALTMAEYFRDVNKQDVLLFIDNIFRFVQAGSEVSALLGRMPSAVGYQPTLSTEMGTLQERITSTKKGSITSIQAVYVPADDLTDPAPATTFAHLDATTVLSRGLAAKGIYPAVDPLDSTSTMLQPRIVGEEHYETAQQVKQTLQRYKELQDIIAILGLDELSEEDRLTVARARKIERFLSQPFFVAEVFTGSPGKYVGLAETIRGFKLILSGEFDSLPEQAFYLVGNIDEATAKATNLEMESKLKK.

Residue T6 is modified to Phosphothreonine. Phosphoserine is present on S13. Residue 172–179 coordinates ATP; sequence GGAGVGKT.

It belongs to the ATPase alpha/beta chains family. In terms of assembly, F-type ATPases have 2 components, CF(1) - the catalytic core - and CF(0) - the membrane proton channel. CF(1) has five subunits: alpha(3), beta(3), gamma(1), delta(1), epsilon(1). CF(0) has four main subunits: a(1), b(1), b'(1) and c(9-12).

The protein resides in the plastid. It localises to the chloroplast thylakoid membrane. It catalyses the reaction ATP + H2O + 4 H(+)(in) = ADP + phosphate + 5 H(+)(out). In terms of biological role, produces ATP from ADP in the presence of a proton gradient across the membrane. The catalytic sites are hosted primarily by the beta subunits. The protein is ATP synthase subunit beta, chloroplastic of Raphanus sativus (Radish).